Consider the following 268-residue polypeptide: Lipase (268 aa).

The first 34 residues, 1 to 34, serve as a signal peptide directing secretion; it reads MRLSRRAATASALLLTPALALFGASAAVSAPRIQ. Ser44 serves as the catalytic Nucleophile. Disulfide bonds link Cys61/Cys86, Cys127/Cys135, and Cys185/Cys232. His250 is a catalytic residue.

As to quaternary structure, monomer.

The protein resides in the secreted. It catalyses the reaction a triacylglycerol + H2O = a diacylglycerol + a fatty acid + H(+). The catalysed reaction is hexadecanoyl-CoA + H2O = hexadecanoate + CoA + H(+). Its activity is regulated as follows. Inhibited by 3,4-dichloroisocoumarin and tetrahydrolipstatin in the absence of substrate, but by phenylmethylsulfonyl fluoride (PMSF) only in the presence of substrate. Several water-miscible solvents enhance the lipase hydrolytic activity in vitro. Tetrahydrofuran and N,N-dimethylformamide (both 50%) inactivate the enzyme with t1/2 of 5 minutes and t1/2 of 2 hours, respectively. Its function is as follows. Catalyzes the hydrolysis of p-nitrophenyl esters, alpha- and beta-naphthyl esters, and triacylglycerols, with a preference for medium acyl chain length (C8-C12). Shows a much higher hydrolysis rate of glycerol esters of unsaturated C16 and C18 fatty acids than that of their saturated counterparts, and a preference for cis double bond. Is also able to hydrolyze several natural oils and Tween detergents. Also displays thioesterase and phospholipase activities, towards palmitoyl-coenzyme A and diheptanoyl glycerophosphocholine, respectively. Shows transesterification activity of racemic 1-phenyl ethanol with vinyl acetate in hexane, proceeding with partial (R)-enantioselectivity. This chain is Lipase, found in Streptomyces rimosus.